We begin with the raw amino-acid sequence, 229 residues long: Enolase-phosphatase E1 (229 aa).

It belongs to the HAD-like hydrolase superfamily. MasA/MtnC family. In terms of assembly, monomer. Requires Mg(2+) as cofactor.

It catalyses the reaction 5-methylsulfanyl-2,3-dioxopentyl phosphate + H2O = 1,2-dihydroxy-5-(methylsulfanyl)pent-1-en-3-one + phosphate. The protein operates within amino-acid biosynthesis; L-methionine biosynthesis via salvage pathway; L-methionine from S-methyl-5-thio-alpha-D-ribose 1-phosphate: step 3/6. It functions in the pathway amino-acid biosynthesis; L-methionine biosynthesis via salvage pathway; L-methionine from S-methyl-5-thio-alpha-D-ribose 1-phosphate: step 4/6. Its function is as follows. Bifunctional enzyme that catalyzes the enolization of 2,3-diketo-5-methylthiopentyl-1-phosphate (DK-MTP-1-P) into the intermediate 2-hydroxy-3-keto-5-methylthiopentenyl-1-phosphate (HK-MTPenyl-1-P), which is then dephosphorylated to form the acireductone 1,2-dihydroxy-3-keto-5-methylthiopentene (DHK-MTPene). The polypeptide is Enolase-phosphatase E1 (Yersinia pseudotuberculosis serotype O:1b (strain IP 31758)).